A 479-amino-acid polypeptide reads, in one-letter code: Calcium/calmodulin-dependent protein kinase type II delta chain (479 aa).

Residues 14–272 enclose the Protein kinase domain; the sequence is YQLFEELGKG…ASEALKHPWI (259 aa). ATP is bound by residues 20 to 28 and lysine 43; that span reads LGKGAFSVV. Aspartate 136 (proton acceptor) is an active-site residue. Threonine 287 is modified (phosphothreonine). Residues serine 315 and serine 319 each carry the phosphoserine modification. Threonine 337 is subject to Phosphothreonine.

It belongs to the protein kinase superfamily. CAMK Ser/Thr protein kinase family. CaMK subfamily. As to quaternary structure, CAMK2 is composed of four different chains: alpha, beta, gamma, and delta. The different isoforms assemble into homo- or heteromultimeric holoenzymes composed of 8 to 12 subunits.

The enzyme catalyses L-seryl-[protein] + ATP = O-phospho-L-seryl-[protein] + ADP + H(+). It catalyses the reaction L-threonyl-[protein] + ATP = O-phospho-L-threonyl-[protein] + ADP + H(+). With respect to regulation, autophosphorylation of CAMK2 plays an important role in the regulation of the kinase activity. CaM-kinase II (CAMK2) is a prominent kinase in the central nervous system. The chain is Calcium/calmodulin-dependent protein kinase type II delta chain (CAMK2D) from Gallus gallus (Chicken).